A 328-amino-acid chain; its full sequence is GMP reductase (328 aa).

Catalysis depends on Cys176, which acts as the Thioimidate intermediate. 205-228 (IIADGGIRTHGDIAKSIRFGASMI) provides a ligand contact to NADP(+).

It belongs to the IMPDH/GMPR family. GuaC type 2 subfamily.

It carries out the reaction IMP + NH4(+) + NADP(+) = GMP + NADPH + 2 H(+). Functionally, catalyzes the irreversible NADPH-dependent deamination of GMP to IMP. It functions in the conversion of nucleobase, nucleoside and nucleotide derivatives of G to A nucleotides, and in maintaining the intracellular balance of A and G nucleotides. The sequence is that of GMP reductase from Streptococcus pneumoniae (strain CGSP14).